The sequence spans 21 residues: Azemiopsin (21 aa).

Positions Asp-1–Pro-14 are enriched in pro residues. The segment at Asp-1–Pro-21 is disordered. Implicated in receptor binding regions lie at residues Trp-3 to Lys-6, Pro-8 to Gly-11, and Arg-13 to Pro-14.

In terms of assembly, monomer. In terms of tissue distribution, expressed by the venom gland.

It is found in the secreted. In terms of biological role, in vitro, reversibly blocks human muscle-type nicotinic acetylcholine receptors (nAChR) alpha-1-beta-1-epsilon-delta/CHRNA1-CHRNB1-CHRNE-CHRND (EC(50)=0.44 uM) and alpha-1-beta-1-gamma-delta/CHRNA1-CHRNB1-CHRNG-CHRND (EC(50)=1.56 uM). Binds to nAChR from T.californica (IC(50)=0.03-0.18 uM), human neuronal nAChR alpha-7/CHRNA7 (IC(50)=22 uM) and acetylcholine-binding proteins (AChBP) from L.stagnalis (IC(50)=63 uM) and A.californica (IC(50)=230 uM). This is Azemiopsin from Azemiops feae (Fea's viper).